Reading from the N-terminus, the 277-residue chain is MSSPAAQTPYALVPTDAEWERLDAQHNGIAKFLDHKLAPVDLGQPKKILEIGSGSGAWAIQAAKQFPDADVLAVDQNPLPARPLPSNIRFQQLNVLEPFPFPPGSFDIVHIRFVLCHLPNGYTVLPRIIELVAPGGWLLVDDIDFLHAFEGLDKAPGVKSGFTGLIKSMESHDADPHFGKTLKGLLESSSALSEVNVQKVELPINPTPEXPALGPLSRTMRQAFSNAVGAEKLNPDTVTKGGLTREVQQAFLNEMGGDAQDWSYSVHLYFSWSQKRV.

The protein belongs to the methyltransferase superfamily. LaeA methyltransferase family.

It functions in the pathway mycotoxin biosynthesis. Its function is as follows. Methyltransferase; part of the gene cluster that mediates the biosynthesis of strobilurin A, an antifungal polyketide that contains a key beta-methoxyacrylate toxophore that targets the complex III of the mitochondrial electron transport chain. Strobilurin biosynthesis begins with construction of benzoyl CoA by step-wise elimination of ammonia from phenylalanine by the phenylalanine ammonia-lyase str11, oxygenation by str8 and retro-Claisen reaction to form benzoic acid, which is activated to its CoA thiolester benzoyl CoA by the dedicated CoA ligase str10. Benzoyl CoA forms the starter unit for the highly reducing polyketide synthase stpks1 that produces the polyketide prestrobilutin A. The FAD-dependent oxygenase str9 then catalyzes the key oxidative rearrangement responsible for the creation of the beta-methoxyacrylate toxophore. Str9 performs epoxidation of the 2,3 olefin of prestrobilutin A, followed by Meinwald rearrangement to furnish the aldehyde intermediate. Rapid enolization of the aldehyde intermediate would give the beta-methoxyacrylate skeleton and methylations catalyzed by str2 and str3 complete the synthesis and lead to the production of strobilurin A. The short-chain dehydrogenase stl2 and the dehydrogenase str4 play a role in the shunt pathway leading to the production of bolineol. The cluster encodes no obvious halogenase gene that could be involved in production of strobilurin B, nor any obvious dimethylallyl-transferase that could be involved in the production of strobilurin G. It is possible that unknown proteins encoded in, or near, the cluster (such as str1 or stl1) may form new classes of halogenases or dimethylally-transferases, or that the responsible genes are located elsewhere on the genome. Similarly, proteins encoded by str5/str6 hydrolases appear to have no chemical role in the biosynthesis of strobilurin A. Finally, no obvious self-resistance gene is found within the cluster. This is Methyltransferase str3 from Strobilurus tenacellus.